The following is a 97-amino-acid chain: Glutamyl-tRNA(Gln) amidotransferase subunit C (97 aa).

Belongs to the GatC family. In terms of assembly, heterotrimer of A, B and C subunits.

It catalyses the reaction L-glutamyl-tRNA(Gln) + L-glutamine + ATP + H2O = L-glutaminyl-tRNA(Gln) + L-glutamate + ADP + phosphate + H(+). It carries out the reaction L-aspartyl-tRNA(Asn) + L-glutamine + ATP + H2O = L-asparaginyl-tRNA(Asn) + L-glutamate + ADP + phosphate + 2 H(+). Functionally, allows the formation of correctly charged Asn-tRNA(Asn) or Gln-tRNA(Gln) through the transamidation of misacylated Asp-tRNA(Asn) or Glu-tRNA(Gln) in organisms which lack either or both of asparaginyl-tRNA or glutaminyl-tRNA synthetases. The reaction takes place in the presence of glutamine and ATP through an activated phospho-Asp-tRNA(Asn) or phospho-Glu-tRNA(Gln). In Sulfurisphaera tokodaii (strain DSM 16993 / JCM 10545 / NBRC 100140 / 7) (Sulfolobus tokodaii), this protein is Glutamyl-tRNA(Gln) amidotransferase subunit C.